The sequence spans 217 residues: Rhicadhesin receptor (217 aa).

An N-terminal signal peptide occupies residues 1 to 20; sequence MKLIAVLLLVVLATATTATA. C30 and C45 form a disulfide bridge. Residues N50 and N68 are each glycosylated (N-linked (GlcNAc...) asparagine). The region spanning 58 to 207 is the Cupin type-1 domain; sequence SNLLVKQGAT…AFQIGTKEVQ (150 aa). The Mn(2+) site is built by H107, H109, E114, and H153.

The protein belongs to the germin family. In terms of processing, glycosylated.

It localises to the secreted. It is found in the extracellular space. The protein localises to the apoplast. The protein resides in the cell wall. In terms of biological role, putative receptor for bacterial rhicadhesin, an attachment protein of rhizobiaceae. The polypeptide is Rhicadhesin receptor (GER1) (Pisum sativum (Garden pea)).